The chain runs to 311 residues: Methionyl-tRNA formyltransferase (311 aa).

109-112 (SLLP) lines the (6S)-5,6,7,8-tetrahydrofolate pocket.

This sequence belongs to the Fmt family.

It catalyses the reaction L-methionyl-tRNA(fMet) + (6R)-10-formyltetrahydrofolate = N-formyl-L-methionyl-tRNA(fMet) + (6S)-5,6,7,8-tetrahydrofolate + H(+). Its function is as follows. Attaches a formyl group to the free amino group of methionyl-tRNA(fMet). The formyl group appears to play a dual role in the initiator identity of N-formylmethionyl-tRNA by promoting its recognition by IF2 and preventing the misappropriation of this tRNA by the elongation apparatus. This chain is Methionyl-tRNA formyltransferase, found in Acetivibrio thermocellus (strain ATCC 27405 / DSM 1237 / JCM 9322 / NBRC 103400 / NCIMB 10682 / NRRL B-4536 / VPI 7372) (Clostridium thermocellum).